Here is a 76-residue protein sequence, read N- to C-terminus: UPF0291 protein BT9727_1737 (76 aa).

It belongs to the UPF0291 family.

Its subcellular location is the cytoplasm. This chain is UPF0291 protein BT9727_1737, found in Bacillus thuringiensis subsp. konkukian (strain 97-27).